Reading from the N-terminus, the 100-residue chain is Urease subunit gamma (100 aa).

It belongs to the urease gamma subunit family. In terms of assembly, heterotrimer of UreA (gamma), UreB (beta) and UreC (alpha) subunits. Three heterotrimers associate to form the active enzyme.

The protein resides in the cytoplasm. The enzyme catalyses urea + 2 H2O + H(+) = hydrogencarbonate + 2 NH4(+). The protein operates within nitrogen metabolism; urea degradation; CO(2) and NH(3) from urea (urease route): step 1/1. This chain is Urease subunit gamma, found in Staphylococcus saprophyticus subsp. saprophyticus (strain ATCC 15305 / DSM 20229 / NCIMB 8711 / NCTC 7292 / S-41).